We begin with the raw amino-acid sequence, 200 residues long: dITP/XTP pyrophosphatase (200 aa).

16–21 (SNNDGK) serves as a coordination point for substrate. Mg(2+) contacts are provided by Glu46 and Asp75. The active-site Proton acceptor is the Asp75. Substrate contacts are provided by residues Ser76, 154-157 (FGYD), Lys177, and 182-183 (HR).

It belongs to the HAM1 NTPase family. Homodimer. Mg(2+) is required as a cofactor.

It catalyses the reaction XTP + H2O = XMP + diphosphate + H(+). It carries out the reaction dITP + H2O = dIMP + diphosphate + H(+). The catalysed reaction is ITP + H2O = IMP + diphosphate + H(+). Its function is as follows. Pyrophosphatase that catalyzes the hydrolysis of nucleoside triphosphates to their monophosphate derivatives, with a high preference for the non-canonical purine nucleotides XTP (xanthosine triphosphate), dITP (deoxyinosine triphosphate) and ITP. Seems to function as a house-cleaning enzyme that removes non-canonical purine nucleotides from the nucleotide pool, thus preventing their incorporation into DNA/RNA and avoiding chromosomal lesions. The polypeptide is dITP/XTP pyrophosphatase (Prochlorococcus marinus (strain SARG / CCMP1375 / SS120)).